The primary structure comprises 541 residues: Beta-hexosaminidase 1 (541 aa).

Residues 1 to 20 form the signal peptide; the sequence is MSTNLLRLILLFITLSITSS. 2 N-linked (GlcNAc...) asparagine glycosylation sites follow: N44 and N304. The cysteines at positions 295 and 337 are disulfide-linked. E332 (proton donor) is an active-site residue. 3 N-linked (GlcNAc...) asparagine glycosylation sites follow: N340, N352, and N497. A disulfide bond links C511 and C538.

The protein belongs to the glycosyl hydrolase 20 family. Post-translationally, N-glycosylated. As to expression, expressed in roots, leaves, stems, flowers and siliques.

It localises to the vacuole. The enzyme catalyses Hydrolysis of terminal non-reducing N-acetyl-D-hexosamine residues in N-acetyl-beta-D-hexosaminides.. Inhibited by N-acetylcastanospermine, 2-acet-amido-1,2-dideoxynojirimycin and PUGNAc. Its function is as follows. Has a broad substrate specificity. Can use synthetic substrates such as pyridylaminated chitotriose, pyridylaminated chitobiose, p-nitrophenyl-beta-N-acetylglucosaminide, p-nitrophenyl-2-acetamido-2-deoxy-beta-D-glucopyranoside (pNP-GlcNAc), p-nitrophenyl-2-acetamido-2-deoxy-beta-D-galactopyranoside (pNP-GalNAc), 4-methylumbelliferyl-2-acetamido-2-deoxy-beta-D-glucopyranoside (MU-GlcNAc), and 4-methylumbelliferyl-6-sulfo-2-acetamido-2-deoxy-beta-D-glucopyranoside (MU-GlcNAc-6SO(4)) as substrates. Removes terminal GlcNAc residues from alpha1,3- and alpha1,6-mannosyl branches of biantennary N-glycans without any strict branch preference. Required for the presence of paucimannosidic N-glycans in glycoproteins of roots and, to a lower extent, of leaves. In Arabidopsis thaliana (Mouse-ear cress), this protein is Beta-hexosaminidase 1 (HEXO1).